The primary structure comprises 357 residues: Ribosomal RNA large subunit methyltransferase M (357 aa).

S-adenosyl-L-methionine contacts are provided by residues serine 183, alanine 216 to glycine 219, aspartate 235, aspartate 255, and aspartate 271. Lysine 300 serves as the catalytic Proton acceptor.

The protein belongs to the class I-like SAM-binding methyltransferase superfamily. RNA methyltransferase RlmE family. RlmM subfamily. Monomer.

It is found in the cytoplasm. It catalyses the reaction cytidine(2498) in 23S rRNA + S-adenosyl-L-methionine = 2'-O-methylcytidine(2498) in 23S rRNA + S-adenosyl-L-homocysteine + H(+). Its function is as follows. Catalyzes the 2'-O-methylation at nucleotide C2498 in 23S rRNA. This Pseudomonas savastanoi pv. phaseolicola (strain 1448A / Race 6) (Pseudomonas syringae pv. phaseolicola (strain 1448A / Race 6)) protein is Ribosomal RNA large subunit methyltransferase M.